Reading from the N-terminus, the 523-residue chain is Glycine betaine transporter 1 (523 aa).

Transmembrane regions (helical) follow at residues 33-53 (VFGISAGFIALFLVAALVLDA), 71-91 (FDWLFIIAGNIFVIFCLALIV), 109-129 (SFMSWLAMLFAAGMGIGLMFW), 165-185 (FHWGLHPWAIYGVVALSLAFF), 214-234 (IVDILAVLATLFGLATSLGLG), 251-271 (GLGLQIVVITVVTLLAVVSVV), 286-306 (MVVAFLLLILVGLIGWAASLG), 337-357 (WTVFYWAWWISWSPFVGMFIA), 372-392 (VLIVPTVVTVVWMSVFGGLAI), 420-440 (VLPFGNILSIIAVVLVLVFFI), 467-487 (VFWAFMEGAIAVALLWIGGSE), and 496-516 (AISTALPFTFILLAMCVSLLM).

It belongs to the BCCT transporter (TC 2.A.15) family.

The protein resides in the cell inner membrane. Functionally, involved in the uptake of the osmoprotectant glycine betaine. This is Glycine betaine transporter 1 from Vibrio parahaemolyticus serotype O3:K6 (strain RIMD 2210633).